The chain runs to 270 residues: Chromo domain-containing protein cec-4 (270 aa).

Disordered stretches follow at residues 1–24 (MAKK…ETSK) and 143–229 (KIAQ…KNDV). In terms of domain architecture, Chromo spans 87–147 (YAVERVLAHR…HQEDLKIAQT (61 aa)). Composition is skewed to basic residues over residues 151 to 167 (TPSK…KRRA) and 187 to 197 (TPKQSTKKLKR). Residues 205–229 (LVEKSKKKAIPDLENHTLDQEKNDV) show a composition bias toward basic and acidic residues.

In terms of assembly, interacts with mono-, di- and tri-methylated 'Lys-9' residues on histone H3. Weakly interacts with methylated 'Lys-37' residues on histone H3.

It localises to the nucleus inner membrane. The protein localises to the membrane. Its function is as follows. Chromatin anchor protein which binds to methylated lysine residues on histone H3, thereby recruiting heterochromatin to the nuclear periphery, especially in embryonic cells, with a lesser role in differentiated cells. May be required for the correct positioning of chromatin and nucleoli in embryos. The protein is Chromo domain-containing protein cec-4 of Caenorhabditis elegans.